The following is a 323-amino-acid chain: tRNA dimethylallyltransferase (323 aa).

27-34 contributes to the ATP binding site; it reads GPTGSGKT. Substrate is bound at residue 29–34; the sequence is TGSGKT. Interaction with substrate tRNA regions lie at residues 52-55 and 176-180; these read DSRQ and QRIVR.

It belongs to the IPP transferase family. Monomer. It depends on Mg(2+) as a cofactor.

The enzyme catalyses adenosine(37) in tRNA + dimethylallyl diphosphate = N(6)-dimethylallyladenosine(37) in tRNA + diphosphate. Catalyzes the transfer of a dimethylallyl group onto the adenine at position 37 in tRNAs that read codons beginning with uridine, leading to the formation of N6-(dimethylallyl)adenosine (i(6)A). In Desulfovibrio desulfuricans (strain ATCC 27774 / DSM 6949 / MB), this protein is tRNA dimethylallyltransferase.